Reading from the N-terminus, the 485-residue chain is Cysteine--tRNA ligase (485 aa).

Residue cysteine 29 coordinates Zn(2+). The 'HIGH' region signature appears at 31–41; that stretch reads ATVQGMPHVGH. Positions 174–198 are disordered; that stretch reads QRVEDMQDAPDADPRGKRDPHDFAL. Residues 185–197 show a composition bias toward basic and acidic residues; it reads ADPRGKRDPHDFA. Positions 227, 252, and 256 each coordinate Zn(2+). The 'KMSKS' region motif lies at 283 to 287; sequence KMSKS. ATP is bound at residue lysine 286.

This sequence belongs to the class-I aminoacyl-tRNA synthetase family. As to quaternary structure, monomer. Requires Zn(2+) as cofactor.

It localises to the cytoplasm. It carries out the reaction tRNA(Cys) + L-cysteine + ATP = L-cysteinyl-tRNA(Cys) + AMP + diphosphate. The polypeptide is Cysteine--tRNA ligase (Micrococcus luteus (strain ATCC 4698 / DSM 20030 / JCM 1464 / CCM 169 / CCUG 5858 / IAM 1056 / NBRC 3333 / NCIMB 9278 / NCTC 2665 / VKM Ac-2230) (Micrococcus lysodeikticus)).